A 337-amino-acid chain; its full sequence is Cysteine proteinase 3 (337 aa).

An N-terminal signal peptide occupies residues 1-21; that stretch reads MRLSITLIFTLIVLSISFISA. Residues 22 to 120 constitute a propeptide, activation peptide; it reads GNVFSHKQYQ…GLRLNRPQFK (99 aa). 3 cysteine pairs are disulfide-bonded: Cys142/Cys185, Cys176/Cys219, and Cys277/Cys326. The active site involves Cys145. Active-site residues include His284 and Asn304.

This sequence belongs to the peptidase C1 family.

It is found in the lysosome. The sequence is that of Cysteine proteinase 3 (cprC) from Dictyostelium discoideum (Social amoeba).